The sequence spans 429 residues: Probable M18 family aminopeptidase 2 (429 aa).

Residues His82, His156, and His401 each contribute to the Zn(2+) site.

Belongs to the peptidase M18 family. The cofactor is Zn(2+).

The sequence is that of Probable M18 family aminopeptidase 2 from Pseudomonas aeruginosa (strain UCBPP-PA14).